The primary structure comprises 378 residues: tRNA-specific 2-thiouridylase MnmA (378 aa).

ATP contacts are provided by residues 7–14 and methionine 33; that span reads GLSGGVDS. The interaction with target base in tRNA stretch occupies residues 102–104; the sequence is NPD. The active-site Nucleophile is the cysteine 107. Residues cysteine 107 and cysteine 209 are joined by a disulfide bond. Glycine 132 contacts ATP. The interaction with tRNA stretch occupies residues 159–161; the sequence is KDQ. Catalysis depends on cysteine 209, which acts as the Cysteine persulfide intermediate. The interaction with tRNA stretch occupies residues 316–317; sequence RY.

The protein belongs to the MnmA/TRMU family.

The protein localises to the cytoplasm. It carries out the reaction S-sulfanyl-L-cysteinyl-[protein] + uridine(34) in tRNA + AH2 + ATP = 2-thiouridine(34) in tRNA + L-cysteinyl-[protein] + A + AMP + diphosphate + H(+). In terms of biological role, catalyzes the 2-thiolation of uridine at the wobble position (U34) of tRNA, leading to the formation of s(2)U34. The polypeptide is tRNA-specific 2-thiouridylase MnmA (Aster yellows witches'-broom phytoplasma (strain AYWB)).